The chain runs to 1407 residues: DNA-directed RNA polymerase subunit beta' (1407 aa).

Zn(2+) contacts are provided by C70, C72, C85, and C88. 3 residues coordinate Mg(2+): D460, D462, and D464. The Zn(2+) site is built by C814, C888, C895, and C898.

The protein belongs to the RNA polymerase beta' chain family. The RNAP catalytic core consists of 2 alpha, 1 beta, 1 beta' and 1 omega subunit. When a sigma factor is associated with the core the holoenzyme is formed, which can initiate transcription. Mg(2+) serves as cofactor. The cofactor is Zn(2+).

The enzyme catalyses RNA(n) + a ribonucleoside 5'-triphosphate = RNA(n+1) + diphosphate. Functionally, DNA-dependent RNA polymerase catalyzes the transcription of DNA into RNA using the four ribonucleoside triphosphates as substrates. This is DNA-directed RNA polymerase subunit beta' from Salmonella paratyphi A (strain ATCC 9150 / SARB42).